The primary structure comprises 97 residues: Co-chaperonin GroES (97 aa).

It belongs to the GroES chaperonin family. As to quaternary structure, heptamer of 7 subunits arranged in a ring. Interacts with the chaperonin GroEL.

It localises to the cytoplasm. Functionally, together with the chaperonin GroEL, plays an essential role in assisting protein folding. The GroEL-GroES system forms a nano-cage that allows encapsulation of the non-native substrate proteins and provides a physical environment optimized to promote and accelerate protein folding. GroES binds to the apical surface of the GroEL ring, thereby capping the opening of the GroEL channel. In Klebsiella pneumoniae (strain 342), this protein is Co-chaperonin GroES.